Reading from the N-terminus, the 119-residue chain is MSPRKTYILKLYVAGNTPNSMRALKTLRDILENEFRGVYALKVIDVLKNPQLAEEDKILATPTLAKILPPPVRRIIGDLSDRERVLIGLDLLYDEISEEMLGSAELDTLADDDIASPDS.

It belongs to the KaiB family. May undergo a major conformational rearrangment; in the free state forms homooligomers. When bound to KaiC switches to a monomeric thioredoxin-fold (KaiB(fs)). The active oscillator complex is probably KaiC(6):KaiB(6).

Functionally, component of the KaiBC clock protein complex, which constitutes the main circadian regulator in cyanobacteria; it may modify the ATPase activity of KaiC. May be a metamorphic protein which reversibly switches between an inactive tetrameric fold and a rare, thioredoxin-like monomeric fold (KaiB(fs)). KaiB(fs) binds phospho-KaiC, and perhaps clock output effectors. The protein is Circadian clock oscillator protein KaiB of Prochlorococcus marinus (strain MIT 9303).